A 485-amino-acid polypeptide reads, in one-letter code: UDP-N-acetylmuramoyl-L-alanyl-D-glutamate--2,6-diaminopimelate ligase (485 aa).

Positions 27 and 29 each coordinate UDP-N-acetyl-alpha-D-muramoyl-L-alanyl-D-glutamate. Residue 106-112 (GTSGKTS) participates in ATP binding. UDP-N-acetyl-alpha-D-muramoyl-L-alanyl-D-glutamate-binding positions include 148–149 (TT), S175, Q181, and R183. K215 carries the post-translational modification N6-carboxylysine. Meso-2,6-diaminopimelate-binding positions include R382, 406–409 (DNPR), G454, and E458. Positions 406–409 (DNPR) match the Meso-diaminopimelate recognition motif motif.

This sequence belongs to the MurCDEF family. MurE subfamily. Mg(2+) is required as a cofactor. In terms of processing, carboxylation is probably crucial for Mg(2+) binding and, consequently, for the gamma-phosphate positioning of ATP.

It localises to the cytoplasm. It carries out the reaction UDP-N-acetyl-alpha-D-muramoyl-L-alanyl-D-glutamate + meso-2,6-diaminopimelate + ATP = UDP-N-acetyl-alpha-D-muramoyl-L-alanyl-gamma-D-glutamyl-meso-2,6-diaminopimelate + ADP + phosphate + H(+). It participates in cell wall biogenesis; peptidoglycan biosynthesis. In terms of biological role, catalyzes the addition of meso-diaminopimelic acid to the nucleotide precursor UDP-N-acetylmuramoyl-L-alanyl-D-glutamate (UMAG) in the biosynthesis of bacterial cell-wall peptidoglycan. The sequence is that of UDP-N-acetylmuramoyl-L-alanyl-D-glutamate--2,6-diaminopimelate ligase from Bradyrhizobium diazoefficiens (strain JCM 10833 / BCRC 13528 / IAM 13628 / NBRC 14792 / USDA 110).